A 248-amino-acid chain; its full sequence is UPF0736 protein BCE33L1074 (248 aa).

It belongs to the UPF0736 family.

In Bacillus cereus (strain ZK / E33L), this protein is UPF0736 protein BCE33L1074.